The following is a 445-amino-acid chain: Exodeoxyribonuclease 7 large subunit (445 aa).

It belongs to the XseA family. In terms of assembly, heterooligomer composed of large and small subunits.

The protein localises to the cytoplasm. The enzyme catalyses Exonucleolytic cleavage in either 5'- to 3'- or 3'- to 5'-direction to yield nucleoside 5'-phosphates.. Bidirectionally degrades single-stranded DNA into large acid-insoluble oligonucleotides, which are then degraded further into small acid-soluble oligonucleotides. The polypeptide is Exodeoxyribonuclease 7 large subunit (Staphylococcus haemolyticus (strain JCSC1435)).